Consider the following 245-residue polypeptide: Farnesol dehydrogenase (245 aa).

NAD(+)-binding positions include 11-40 (VTGASSGIGAAITTDLAKAGMVVVGLARRV) and D64. S145 contacts substrate. The active-site Proton acceptor is Y160. K164 is an NAD(+) binding site.

This sequence belongs to the short-chain dehydrogenases/reductases (SDR) family. As to quaternary structure, homodimer. In terms of tissue distribution, highly expressed level in the midgut and brain in adult females, and at lower level in the abdominal and thoracic ganglia. High levels are detected in corpora allata (CA), Malpighian tubules and fat body.

It catalyses the reaction (2E,6E)-farnesol + NADP(+) = (2E,6E)-farnesal + NADPH + H(+). Mediates oxidation of farnesol into farnesal, a precursor of juvenile hormone in the corpora allata (CA), the glands that synthesize juvenile hormone. Able to oxidize C(10) to C(15) isoprenoid and aliphatic alcohols. This chain is Farnesol dehydrogenase, found in Aedes aegypti (Yellowfever mosquito).